Reading from the N-terminus, the 82-residue chain is RNA-binding protein GK0100 (82 aa).

Belongs to the eukaryotic ribosomal protein eL8 family.

In Geobacillus kaustophilus (strain HTA426), this protein is RNA-binding protein GK0100.